A 399-amino-acid chain; its full sequence is MRPERPRPRGSAPGPMETPPWDPARNDSLPPTLTPAVPPYVKLGLTVVYTVFYALLFVFIYVQLWLVLRYRHKRLSYQSVFLFLCLFWASLRTVLFSFYFKDFVAANSLSPFVFWLLYCFPVCLQFFTLTLMNLYFTQVIFKAKSKYSPELLKYRLPLYLASLFISLVFLLVNLTCAVLVKTGNWERKVIVSVRVAINDTLFVLCAVSLSICLYKISKMSLANIYLESKGSSVCQVTAIGVTVILLYTSRACYNLFILSFSQNKSVHSFDYDWYNVSDQADLKNQLGDAGYVLFGVVLFVWELLPTTLVVYFFRVRNPTKDLTNPGMVPSHGFSPRSYFFDNPRRYDSDDDLAWNIAPQGLQGGFAPDYYDWGQQTNSFLAQAGTLQDSTLDPDKPSLG.

The disordered stretch occupies residues 1 to 22; sequence MRPERPRPRGSAPGPMETPPWD. At 1–46 the chain is on the lumenal side; the sequence is MRPERPRPRGSAPGPMETPPWDPARNDSLPPTLTPAVPPYVKLGLT. Residue N26 is glycosylated (N-linked (GlcNAc...) asparagine). A helical membrane pass occupies residues 47 to 67; it reads VVYTVFYALLFVFIYVQLWLV. The Cytoplasmic portion of the chain corresponds to 68-79; the sequence is LRYRHKRLSYQS. Residues 80–100 form a helical membrane-spanning segment; the sequence is VFLFLCLFWASLRTVLFSFYF. The Lumenal portion of the chain corresponds to 101–111; the sequence is KDFVAANSLSP. Residues 112-132 form a helical membrane-spanning segment; sequence FVFWLLYCFPVCLQFFTLTLM. The Cytoplasmic portion of the chain corresponds to 133–159; the sequence is NLYFTQVIFKAKSKYSPELLKYRLPLY. The chain crosses the membrane as a helical span at residues 160 to 180; the sequence is LASLFISLVFLLVNLTCAVLV. At 181-188 the chain is on the lumenal side; that stretch reads KTGNWERK. The helical transmembrane segment at 189 to 209 threads the bilayer; the sequence is VIVSVRVAINDTLFVLCAVSL. Residues 210-237 are Cytoplasmic-facing; sequence SICLYKISKMSLANIYLESKGSSVCQVT. A helical membrane pass occupies residues 238–258; it reads AIGVTVILLYTSRACYNLFIL. Residues 259-292 lie on the Lumenal side of the membrane; it reads SFSQNKSVHSFDYDWYNVSDQADLKNQLGDAGYV. 2 N-linked (GlcNAc...) asparagine glycosylation sites follow: N263 and N275. Residues 293–313 form a helical membrane-spanning segment; sequence LFGVVLFVWELLPTTLVVYFF. The Cytoplasmic segment spans residues 314–399; it reads RVRNPTKDLT…TLDPDKPSLG (86 aa).

The protein belongs to the GPR137 family. Interaction with RRAGA; increases RRAGA recruitment to lysosomes. Interacts with MTOR; this interaction is amino acid sensitive. As to expression, expressed in kidney, heart, brain and placenta.

It localises to the lysosome membrane. Functionally, lysosomal integral membrane protein that regulates the localization and activity of mTORC1, a signaling complex promoting cell growth in response to growth factors, energy levels, and amino acids. Interacts with Rag GTPases and increases the lysosomial localization and activity of Rag GTPases and thereby regulates mTORC1 translocation and activity in lysosome. Involved in the regulation of lysosomal morphology and autophagy. In terms of biological role, also acts as a negative regulator of osteoclast activity. Involved in interleukin-4-induced M2 macrophage polarization. The chain is Integral membrane protein GPR137B (GPR137B) from Homo sapiens (Human).